Here is a 297-residue protein sequence, read N- to C-terminus: Light-independent protochlorophyllide reductase iron-sulfur ATP-binding protein (297 aa).

ATP-binding positions include G41 to T46 and K70. S45 lines the Mg(2+) pocket. The [4Fe-4S] cluster site is built by C126 and C160. ATP contacts are provided by residues N211–R212 and P235–L237.

It belongs to the NifH/BchL/ChlL family. In terms of assembly, homodimer. Protochlorophyllide reductase is composed of three subunits; BchL, BchN and BchB. The cofactor is [4Fe-4S] cluster.

It catalyses the reaction chlorophyllide a + oxidized 2[4Fe-4S]-[ferredoxin] + 2 ADP + 2 phosphate = protochlorophyllide a + reduced 2[4Fe-4S]-[ferredoxin] + 2 ATP + 2 H2O. Its pathway is porphyrin-containing compound metabolism; bacteriochlorophyll biosynthesis (light-independent). Functionally, component of the dark-operative protochlorophyllide reductase (DPOR) that uses Mg-ATP and reduced ferredoxin to reduce ring D of protochlorophyllide (Pchlide) to form chlorophyllide a (Chlide). This reaction is light-independent. The L component serves as a unique electron donor to the NB-component of the complex, and binds Mg-ATP. The chain is Light-independent protochlorophyllide reductase iron-sulfur ATP-binding protein from Methylobacterium radiotolerans (strain ATCC 27329 / DSM 1819 / JCM 2831 / NBRC 15690 / NCIMB 10815 / 0-1).